The primary structure comprises 263 residues: Acyl-[acyl-carrier-protein]--UDP-N-acetylglucosamine O-acyltransferase (263 aa).

It belongs to the transferase hexapeptide repeat family. LpxA subfamily. In terms of assembly, homotrimer.

Its subcellular location is the cytoplasm. It catalyses the reaction a (3R)-hydroxyacyl-[ACP] + UDP-N-acetyl-alpha-D-glucosamine = a UDP-3-O-[(3R)-3-hydroxyacyl]-N-acetyl-alpha-D-glucosamine + holo-[ACP]. The protein operates within glycolipid biosynthesis; lipid IV(A) biosynthesis; lipid IV(A) from (3R)-3-hydroxytetradecanoyl-[acyl-carrier-protein] and UDP-N-acetyl-alpha-D-glucosamine: step 1/6. Involved in the biosynthesis of lipid A, a phosphorylated glycolipid that anchors the lipopolysaccharide to the outer membrane of the cell. The sequence is that of Acyl-[acyl-carrier-protein]--UDP-N-acetylglucosamine O-acyltransferase from Xanthomonas campestris pv. campestris (strain 8004).